The chain runs to 885 residues: Alanine--tRNA ligase (885 aa).

His564, His568, Cys676, and His680 together coordinate Zn(2+).

The protein belongs to the class-II aminoacyl-tRNA synthetase family. It depends on Zn(2+) as a cofactor.

Its subcellular location is the cytoplasm. The catalysed reaction is tRNA(Ala) + L-alanine + ATP = L-alanyl-tRNA(Ala) + AMP + diphosphate. Its function is as follows. Catalyzes the attachment of alanine to tRNA(Ala) in a two-step reaction: alanine is first activated by ATP to form Ala-AMP and then transferred to the acceptor end of tRNA(Ala). Also edits incorrectly charged Ser-tRNA(Ala) and Gly-tRNA(Ala) via its editing domain. This is Alanine--tRNA ligase from Brucella abortus (strain 2308).